The primary structure comprises 156 residues: ATP synthase subunit b (156 aa).

Residues 7–29 form a helical membrane-spanning segment; that stretch reads LFGQTVAFILFVWFCMKFVWPPL.

This sequence belongs to the ATPase B chain family. In terms of assembly, F-type ATPases have 2 components, F(1) - the catalytic core - and F(0) - the membrane proton channel. F(1) has five subunits: alpha(3), beta(3), gamma(1), delta(1), epsilon(1). F(0) has three main subunits: a(1), b(2) and c(10-14). The alpha and beta chains form an alternating ring which encloses part of the gamma chain. F(1) is attached to F(0) by a central stalk formed by the gamma and epsilon chains, while a peripheral stalk is formed by the delta and b chains.

It localises to the cell inner membrane. In terms of biological role, f(1)F(0) ATP synthase produces ATP from ADP in the presence of a proton or sodium gradient. F-type ATPases consist of two structural domains, F(1) containing the extramembraneous catalytic core and F(0) containing the membrane proton channel, linked together by a central stalk and a peripheral stalk. During catalysis, ATP synthesis in the catalytic domain of F(1) is coupled via a rotary mechanism of the central stalk subunits to proton translocation. Functionally, component of the F(0) channel, it forms part of the peripheral stalk, linking F(1) to F(0). This Shewanella frigidimarina (strain NCIMB 400) protein is ATP synthase subunit b.